The primary structure comprises 145 residues: D-aminoacyl-tRNA deacylase (145 aa).

The Gly-cisPro motif, important for rejection of L-amino acids signature appears at 137 to 138; the sequence is GP.

It belongs to the DTD family. As to quaternary structure, homodimer.

It is found in the cytoplasm. The enzyme catalyses glycyl-tRNA(Ala) + H2O = tRNA(Ala) + glycine + H(+). It catalyses the reaction a D-aminoacyl-tRNA + H2O = a tRNA + a D-alpha-amino acid + H(+). Functionally, an aminoacyl-tRNA editing enzyme that deacylates mischarged D-aminoacyl-tRNAs. Also deacylates mischarged glycyl-tRNA(Ala), protecting cells against glycine mischarging by AlaRS. Acts via tRNA-based rather than protein-based catalysis; rejects L-amino acids rather than detecting D-amino acids in the active site. By recycling D-aminoacyl-tRNA to D-amino acids and free tRNA molecules, this enzyme counteracts the toxicity associated with the formation of D-aminoacyl-tRNA entities in vivo and helps enforce protein L-homochirality. The sequence is that of D-aminoacyl-tRNA deacylase from Escherichia coli O139:H28 (strain E24377A / ETEC).